The primary structure comprises 267 residues: Lectin SfL-2 (267 aa).

4 repeat units span residues 1-67, 68-135, 136-202, and 203-267. The 4 X approximate tandem repeats stretch occupies residues 1–267; it reads GRYTVQNQWG…GPIGFKGVAN (267 aa).

As to quaternary structure, monomer.

In terms of biological role, lectin specific for high mannose N-glycans, recognizes the branched moiety of these glycans. Does not recognize other types of N-glycans or monosaccharides. In Solieria filiformis (Red alga), this protein is Lectin SfL-2.